The following is a 227-amino-acid chain: Enolase-phosphatase E1 (227 aa).

Asp-11 and Glu-13 together coordinate Mg(2+). Substrate-binding positions include 118–119 (SS) and Lys-161. Asp-186 is a binding site for Mg(2+).

Belongs to the HAD-like hydrolase superfamily. MasA/MtnC family. Monomer. The cofactor is Mg(2+).

Its subcellular location is the cytoplasm. The protein localises to the nucleus. It carries out the reaction 5-methylsulfanyl-2,3-dioxopentyl phosphate + H2O = 1,2-dihydroxy-5-(methylsulfanyl)pent-1-en-3-one + phosphate. It functions in the pathway amino-acid biosynthesis; L-methionine biosynthesis via salvage pathway; L-methionine from S-methyl-5-thio-alpha-D-ribose 1-phosphate: step 3/6. The protein operates within amino-acid biosynthesis; L-methionine biosynthesis via salvage pathway; L-methionine from S-methyl-5-thio-alpha-D-ribose 1-phosphate: step 4/6. In terms of biological role, bifunctional enzyme that catalyzes the enolization of 2,3-diketo-5-methylthiopentyl-1-phosphate (DK-MTP-1-P) into the intermediate 2-hydroxy-3-keto-5-methylthiopentenyl-1-phosphate (HK-MTPenyl-1-P), which is then dephosphorylated to form the acireductone 1,2-dihydroxy-3-keto-5-methylthiopentene (DHK-MTPene). The protein is Enolase-phosphatase E1 of Saccharomyces cerevisiae (strain YJM789) (Baker's yeast).